Consider the following 311-residue polypeptide: Homeobox-leucine zipper protein HOX1 (311 aa).

2 disordered regions span residues 29–69 and 97–160; these read AGGA…SDHR and AETT…KKLR. The span at 119-145 shows a compositional bias: low complexity; it reads SSPNSTLSSLSGKRGAPSAATAAAAAA. Positions 154–213 form a DNA-binding region, homeobox; it reads GSRKKLRLSKDQAAVLEDTFKEHNTLNPKQKAALARQLNLKPRQVEVWFQNRRARTKLKQ. The interval 212–256 is leucine-zipper; it reads KQTEVDCELLKRCCETLTDENRRLHRELQELRALKLATAAAAPHH. Residues 279 to 311 are disordered; sequence SAATTTRNNSGAAPARPVPTRPWPPAAAQRSSA. Residues 280–289 show a composition bias toward polar residues; it reads AATTTRNNSG. The segment covering 294 to 303 has biased composition (pro residues); sequence RPVPTRPWPP.

It belongs to the HD-ZIP homeobox family. Class II subfamily. In terms of assembly, homodimer. May form a heterodimer with HOX2, HOX3 or HOX7. As to expression, expressed in root provascular and vascular cylinder, provascular and vascular strands of leaves, provascular and vascular strands of the whole panicle, in mature embryo provascular bundles of scutellum and embryonic axis and provascular and vascular strands of young immature spikelet organs. Expressed in differentiating and differentiated xylem and phloem elements, and in outer and inner bundle sheath cells of all vascular bundles. Expressed in auricles, ligules, culm, guard cells brac hairs and pollen.

Its subcellular location is the nucleus. Functionally, probable transcription repressor involved leaf development. Binds to the DNA sequence 5'-CAAT[GC]ATTG-3'. May act as a regulatory switch to specify provascular cell fate. The protein is Homeobox-leucine zipper protein HOX1 (HOX1) of Oryza sativa subsp. indica (Rice).